Here is a 65-residue protein sequence, read N- to C-terminus: Sodium channel neurotoxin MeuNaTxalpha-9 (65 aa).

In terms of domain architecture, LCN-type CS-alpha/beta spans 2–64; the sequence is RDGYIANDRN…VPIRIPGECR (63 aa). Cystine bridges form between cysteine 12-cysteine 63, cysteine 16-cysteine 36, cysteine 22-cysteine 46, and cysteine 26-cysteine 48. Arginine 64 carries the arginine amide modification.

The protein belongs to the long (4 C-C) scorpion toxin superfamily. Sodium channel inhibitor family. Alpha subfamily. In terms of tissue distribution, expressed by the venom gland.

It localises to the secreted. In terms of biological role, alpha toxins bind voltage-independently at site-3 of sodium channels (Nav) and inhibit the inactivation of the activated channels, thereby blocking neuronal transmission. The sequence is that of Sodium channel neurotoxin MeuNaTxalpha-9 from Mesobuthus eupeus (Lesser Asian scorpion).